The following is a 216-amino-acid chain: Ras-related protein Rab-5C (216 aa).

Residues Ser-30, Ala-31, Gly-33, Lys-34, Ser-35, Ser-36, His-47, Glu-48, Thr-53, and Gly-79 each contribute to the GTP site. Position 35 (Ser-35) interacts with Mg(2+). 2 short sequence motifs (switch) span residues 45-57 (QFHE…IGAA) and 78-94 (AGQE…YRGA). Thr-53 is a Mg(2+) binding site. Position 85 is a phosphoserine; by LRRK2 (Ser-85). Residues Asn-134, Lys-135, Asp-137, Ala-165, and Lys-166 each coordinate GTP. A disordered region spans residues 185–216 (NEPQNATGAPGRNRGVDLQENNPASRSQCCSN). Residues 203 to 216 (QENNPASRSQCCSN) show a composition bias toward polar residues. 2 S-geranylgeranyl cysteine lipidation sites follow: Cys-213 and Cys-214.

This sequence belongs to the small GTPase superfamily. Rab family. Interacts with EEA1. Interacts with INCA1. Interacts with GDI1, GDI2, CHML and CHM; phosphorylation at Ser-85 disrupts this interaction. Mg(2+) is required as a cofactor. Phosphorylation of Ser-85 in the switch II region by LRRK2 prevents the association of RAB regulatory proteins, including CHM, CHML and RAB GDP dissociation inhibitors GDI1 and GDI2. Post-translationally, (Microbial infection) Glycosylated on arginine residues by S.typhimurium protein Ssek3.

Its subcellular location is the cell membrane. It localises to the early endosome membrane. The protein localises to the melanosome. It carries out the reaction GTP + H2O = GDP + phosphate + H(+). With respect to regulation, regulated by guanine nucleotide exchange factors (GEFs) which promote the exchange of bound GDP for free GTP. Regulated by GTPase activating proteins (GAPs) which increase the GTP hydrolysis activity. Inhibited by GDP dissociation inhibitors (GDIs). Functionally, the small GTPases Rab are key regulators of intracellular membrane trafficking, from the formation of transport vesicles to their fusion with membranes. Rabs cycle between an inactive GDP-bound form and an active GTP-bound form that is able to recruit to membranes different sets of downstream effectors directly responsible for vesicle formation, movement, tethering and fusion. This Homo sapiens (Human) protein is Ras-related protein Rab-5C.